The following is a 303-amino-acid chain: MAEGLRAPPPPGNGSECPDGARWVLRLLGECARDGRDVGSALLGLLSIGCFAAAALPQFYQACKTGIMDRALSIYFLLGWLGGDLLNLIGSFLANQLPLQVYTAVYYVLADLVMLSLYGYYKAKNWGTGATASINAACLFCLLGTATTLTVLSHDTGPAPNPAAFGGRSLLSLGLEGPGPEPISKTEIIGFAIGSISSVLYLCSRLPQIYTNYRRKSTAGVSFLLFALVMLGNLLYGTSVLLKNPEPGQSEGDYILHHLPWLIGSLGVLSLDVIISFQFLAYRTGQPSAGEEREALLAEHGDS.

Over 1-38 (MAEGLRAPPPPGNGSECPDGARWVLRLLGECARDGRDV) the chain is Lumenal. Asparagine 13 carries an N-linked (GlcNAc...) asparagine glycan. A PQ-loop 1 domain is found at 36–102 (RDVGSALLGL…LANQLPLQVY (67 aa)). The chain crosses the membrane as a helical span at residues 39 to 59 (GSALLGLLSIGCFAAAALPQF). The Cytoplasmic segment spans residues 60 to 73 (YQACKTGIMDRALS). A helical transmembrane segment spans residues 74 to 94 (IYFLLGWLGGDLLNLIGSFLA). At 95–96 (NQ) the chain is on the lumenal side. Residues 97 to 117 (LPLQVYTAVYYVLADLVMLSL) form a helical membrane-spanning segment. At 118 to 131 (YGYYKAKNWGTGAT) the chain is on the cytoplasmic side. Residues 132-152 (ASINAACLFCLLGTATTLTVL) traverse the membrane as a helical segment. Residues 153–182 (SHDTGPAPNPAAFGGRSLLSLGLEGPGPEP) are Lumenal-facing. Residues 183–203 (ISKTEIIGFAIGSISSVLYLC) form a helical membrane-spanning segment. Residues 186-251 (TEIIGFAIGS…LKNPEPGQSE (66 aa)) form the PQ-loop 2 domain. At 204–220 (SRLPQIYTNYRRKSTAG) the chain is on the cytoplasmic side. The chain crosses the membrane as a helical span at residues 221-241 (VSFLLFALVMLGNLLYGTSVL). Residues 242-260 (LKNPEPGQSEGDYILHHLP) lie on the Lumenal side of the membrane. The chain crosses the membrane as a helical span at residues 261–281 (WLIGSLGVLSLDVIISFQFLA). Over 282 to 303 (YRTGQPSAGEEREALLAEHGDS) the chain is Cytoplasmic. The Di-leucine motif motif lies at 296–297 (LL).

This sequence belongs to the laat-1 family.

The protein resides in the lysosome membrane. Its function is as follows. Amino acid transporter that specifically mediates the pH-dependent export of the cationic amino acids arginine, histidine and lysine from lysosomes. This Gallus gallus (Chicken) protein is Lysosomal amino acid transporter 1 homolog (SLC66A1).